A 901-amino-acid chain; its full sequence is Core protein VP3 (901 aa).

The protein belongs to the orbivirus VP3 family.

The protein resides in the virion. Its function is as follows. The VP3 protein is one of the five proteins (with VP1, VP4, VP6 and VP7) which form the inner capsid of the virus. The sequence is that of Core protein VP3 (Segment-3) from Antilocapra americana (Pronghorn).